Reading from the N-terminus, the 889-residue chain is MSNPFAHLVEPLDPAQPGKKFFNLNKLEDSRYGSLPFSIRVLLEAAIRNCDQFLVKKNDVENILNWKVMQHKNIEVPFKPARVILQDFTGVPAVVDFAAMRDAVKKLGGNPEKINPICPADLVIDHSIQVDFNRRADSLKKNQDLEFERNKERFEFLKWGSQAFHNMRIIPPGSGIIHQVNLEYLARVVFDQDGYYYPDSLVGTDSHTTMIDGLGVLGWGVGGIEAEAVMLGQPISMVLPQVIGYRLVGNPHPLVTSTDIVLTITKHLRQVGVVGKFVEFFGPGVAQLSIADRATIANMCPEYGATAAFFPVDEVSIKYLVQTGRDKEKVKHIKQYLQAVGMFRDFSDSSQDPDFAQVVELDLKTVVPCCSGPKRPQDKVAVSDMKKDFESCLGAKQGFKGFQVAPDHHNDHKTFIYNNSKFTLAHGSVVIAAITSCTNTSNPSVMLGAGLLAKKAVDAGLSVKPYIKTSLSPGSGVVTYYLRESGVMPYLSQLGFDVVGYGCMTCIGNSGPLPEAVVEAIVQGDLVAVGVLSGNRNFEGRVHPNTRANYLASPPLVIAYAIAGTIRIDFEKEPLGVNAKGQQVFLKDIWPTRDEIQAVERQYVIPGMFKEVYQKIETVNESWNALAAPSDKLYCWNPKSTYIKSPPFFEDLTLDLQPPKSIVDAYVLLNLGDSVTTDHISPAGNIARNSPAARYLTNRGLTPREFNSYGSRRGNDAIMARGTFANIRLLNKFLNKQAPQTIHLPSGEILDVFDAAERYQQAGLPLIVLAGKEYGSGSSRDWAAKGPFLLGIRAVLAESYERIHRSNLVGMGVIPLEYLPGENADTLGLTGRERYTISIPETLKPRMKVQIKLDTGKTFQAVMRFDTDVELTYFHNGGILNYMIRKMTK.

Substrate contacts are provided by residues Gln86 and 205-207 (DSH). [4Fe-4S] cluster-binding residues include Cys437, Cys503, and Cys506. Substrate contacts are provided by residues Arg536, Arg541, Arg699, and 779–780 (SR).

The protein belongs to the aconitase/IPM isomerase family. Interacts (when associated with the 4Fe-4S) with FBXL5. Interacts with frataxin(81-210). Requires [4Fe-4S] cluster as cofactor.

It is found in the cytoplasm. The protein resides in the cytosol. It catalyses the reaction citrate = D-threo-isocitrate. Its function is as follows. Bifunctional iron sensor that switches between 2 activities depending on iron availability. Iron deprivation, promotes its mRNA binding activity through which it regulates the expression of genes involved in iron uptake, sequestration and utilization. Binds to iron-responsive elements (IRES) in the untranslated region of target mRNAs preventing for instance the translation of ferritin and aminolevulinic acid synthase and stabilizing the transferrin receptor mRNA. In terms of biological role, conversely, when cellular iron levels are high, binds a 4Fe-4S cluster which precludes RNA binding activity and promotes the aconitase activity, the isomerization of citrate to isocitrate via cis-aconitate. The protein is Cytoplasmic aconitate hydratase (ACO1) of Bos taurus (Bovine).